A 457-amino-acid chain; its full sequence is L-asparaginase-like protein GL17509 (457 aa).

Positions 1–20 (MRYLCRAQLLSLLLLPLLKA) are cleaved as a signal peptide. Disulfide bonds link Cys-72/Cys-78, Cys-172/Cys-188, and Cys-327/Cys-354.

The protein belongs to the Ntn-hydrolase family.

This is L-asparaginase-like protein GL17509 from Drosophila persimilis (Fruit fly).